A 317-amino-acid polypeptide reads, in one-letter code: Transaldolase (317 aa).

Catalysis depends on K132, which acts as the Schiff-base intermediate with substrate.

Belongs to the transaldolase family. Type 1 subfamily.

The protein resides in the cytoplasm. The catalysed reaction is D-sedoheptulose 7-phosphate + D-glyceraldehyde 3-phosphate = D-erythrose 4-phosphate + beta-D-fructose 6-phosphate. Its pathway is carbohydrate degradation; pentose phosphate pathway; D-glyceraldehyde 3-phosphate and beta-D-fructose 6-phosphate from D-ribose 5-phosphate and D-xylulose 5-phosphate (non-oxidative stage): step 2/3. In terms of biological role, transaldolase is important for the balance of metabolites in the pentose-phosphate pathway. The protein is Transaldolase of Haemophilus influenzae (strain ATCC 51907 / DSM 11121 / KW20 / Rd).